The chain runs to 150 residues: Peptidoglycan-associated lipoprotein (150 aa).

An N-terminal signal peptide occupies residues 1-19 (MKKLTKVLLVAGSVAVLAA). Cysteine 20 is lipidated: N-palmitoyl cysteine. The S-diacylglycerol cysteine moiety is linked to residue cysteine 20. In terms of domain architecture, OmpA-like spans 37–150 (SVQDLQQRYN…SKNRRAVLAY (114 aa)).

It belongs to the Pal lipoprotein family. In terms of assembly, the Tol-Pal system is composed of five core proteins: the inner membrane proteins TolA, TolQ and TolR, the periplasmic protein TolB and the outer membrane protein Pal. They form a network linking the inner and outer membranes and the peptidoglycan layer.

Its subcellular location is the cell outer membrane. Part of the Tol-Pal system, which plays a role in outer membrane invagination during cell division and is important for maintaining outer membrane integrity. This Pasteurella multocida (strain Pm70) protein is Peptidoglycan-associated lipoprotein.